A 703-amino-acid chain; its full sequence is Protein teflon (703 aa).

A C2H2-type 1 zinc finger spans residues 32-55; that stretch reads MLCHFCKDIFTHLPEFMRHLQWSH. 4 disordered regions span residues 78 to 111, 140 to 161, 205 to 239, and 339 to 434; these read SSED…PGSS, EQSY…ARKP, NDVS…MPSL, and SQQP…SKLE. Residues 84 to 94 show a composition bias toward polar residues; that stretch reads QSQANSCSSGD. A compositionally biased stretch (basic and acidic residues) spans 148–161; that stretch reads PDSRTEGFRCARKP. Composition is skewed to polar residues over residues 339 to 352 and 364 to 373; these read SQQP…NNAV and SLTVISSSPI. 2 C2H2-type zinc fingers span residues 649-672 and 677-700; these read YFCE…QSVH and FTCS…KTVH.

The protein belongs to the Teflon family.

The protein resides in the nucleus. It localises to the chromosome. In terms of biological role, specifically required in males for proper segregation of autosomal bivalents at meiosis I. Expression is required in the male germ line prior to spermatocyte stage S4. May have a role as a bridging molecule maintaining adhesion to hold autosome bivalents together via heterochromatic connections. The protein is Protein teflon of Drosophila persimilis (Fruit fly).